The primary structure comprises 131 residues: Protein SOB FIVE-LIKE 4 (131 aa).

Disordered regions lie at residues 1–21 (MDKEECSSSESGWTTYLSSPI) and 40–131 (IYNY…YRMK). Over residues 8-18 (SSESGWTTYLS) the composition is skewed to polar residues. The SOFL-A signature appears at 11 to 16 (SGWTTY). A compositionally biased stretch (basic and acidic residues) spans 46–58 (KVEHEEERNKDSD). Residues 60-69 (SMASDASSGP) carry the SOFL-B motif. The span at 79 to 109 (KALDLKNGKNEGNSKSKNDDDHHNHYHDGKK) shows a compositional bias: basic and acidic residues. The Nuclear localization signal motif lies at 107-114 (GKKTSNSY). Basic residues predominate over residues 114-131 (YRKKDKKKRENKSTYRMK).

This sequence belongs to the SOFL plant protein family. In terms of tissue distribution, expressed, at low levels, in seedlings, roots, flowers and siliques.

The protein localises to the cytoplasm. Its subcellular location is the nucleus. Involved in cytokinin-mediated development. The sequence is that of Protein SOB FIVE-LIKE 4 from Arabidopsis thaliana (Mouse-ear cress).